The following is a 131-amino-acid chain: Hypocretin neuropeptide precursor (131 aa).

The first 33 residues, 1–33, serve as a signal peptide directing secretion; the sequence is MNPPFAKVSWATVTLLLLLLLLPPAVLSPGAAA. Pyrrolidone carboxylic acid is present on Q34. Disulfide bonds link C39–C45 and C40–C47. L66 is subject to Leucine amide. The residue at position 97 (M97) is a Methionine amide. A propeptide spans 98-131 (removed in mature form); it reads GRRAGAEPAPRLCPGRRCLAAAASSVAPGGRSGI.

Belongs to the orexin family. Specific enzymatic cleavages at paired basic residues yield the different active peptides.

It is found in the rough endoplasmic reticulum. Its subcellular location is the cytoplasmic vesicle. The protein localises to the synapse. In terms of biological role, neuropeptides that play a significant role in the regulation of food intake and sleep-wakefulness, possibly by coordinating the complex behavioral and physiologic responses of these complementary homeostatic functions. A broader role in the homeostatic regulation of energy metabolism, autonomic function, hormonal balance and the regulation of body fluids, is also suggested. Functionally, binds to orexin receptors HCRTR1/OX1R and HCRTR2/OX2R with a high affinity. Stimulates food intake. Modulates pituitary luteinizing hormone secretion in an ovarian steroid-dependent manner. Binds to orexin receptor HCRTR2/OX2R only. Stimulates food intake. Modulates pituitary luteinizing hormone secretion in an ovarian steroid-dependent manner. The protein is Hypocretin neuropeptide precursor (HCRT) of Sus scrofa (Pig).